Consider the following 313-residue polypeptide: Platelet glycoprotein VI (313 aa).

Residues 1 to 21 form the signal peptide; that stretch reads MSPASPTFFCIGLCVLQVIQT. Residues 22-265 lie on the Extracellular side of the membrane; it reads QSGPLPKPSL…FGFAHQHYAK (244 aa). 2 Ig-like C2-type domains span residues 27–105 and 115–197; these read PKPS…DQLE and PSLS…APSD. A disulfide bridge links Cys49 with Cys89. N-linked (GlcNAc...) asparagine glycosylation occurs at Asn93. Cys135 and Cys181 are disulfide-bonded. The interval 213–236 is disordered; that stretch reads VPTEESFPVTESSRRPSILPTNKI. Asn244 is a glycosylation site (N-linked (GlcNAc...) asparagine). The helical transmembrane segment at 266-286 threads the bilayer; it reads GNLVRICLGATIIIILLGLLA. Residues 287 to 313 are Cytoplasmic-facing; it reads EDWHSRKKCLQHRMRALQRPLPPLPLA.

As to quaternary structure, associated with Fc receptor gamma chain. The GPVI:FcRgamma complex is associated with the Src kinase family FYN and LYN. Interacts with TRAF4. Interacts with COL1A1, but not with COL4A4. Megakaryocytes and platelets.

The protein localises to the cell membrane. Collagen receptor involved in collagen-induced platelet adhesion and activation. Plays a key role in platelet procoagulant activity and subsequent thrombin and fibrin formation. This procoagulant function may contribute to arterial and venous thrombus formation. The signaling pathway involves the FcR gamma-chain, the Src kinases (likely FYN or LYN) and SYK, the adapter protein LAT and leads to the activation of PLCG2. This Mus musculus (Mouse) protein is Platelet glycoprotein VI.